Consider the following 699-residue polypeptide: Polyribonucleotide nucleotidyltransferase (699 aa).

Positions 485 and 491 each coordinate Mg(2+). Residues 552-611 (PRITTIKINPEKIRDVIGKGGAVIRALTEETGTTIELEDDGTVKIASSNGEATKEAIRRI) form the KH domain. Residues 621–689 (GRIYNGKVIR…RQGRVRLSIK (69 aa)) enclose the S1 motif domain.

It belongs to the polyribonucleotide nucleotidyltransferase family. Component of the RNA degradosome, which is a multiprotein complex involved in RNA processing and mRNA degradation. Requires Mg(2+) as cofactor.

Its subcellular location is the cytoplasm. The enzyme catalyses RNA(n+1) + phosphate = RNA(n) + a ribonucleoside 5'-diphosphate. Functionally, involved in mRNA degradation. Catalyzes the phosphorolysis of single-stranded polyribonucleotides processively in the 3'- to 5'-direction. The chain is Polyribonucleotide nucleotidyltransferase from Shewanella oneidensis (strain ATCC 700550 / JCM 31522 / CIP 106686 / LMG 19005 / NCIMB 14063 / MR-1).